Consider the following 176-residue polypeptide: Large ribosomal subunit protein uL6 (176 aa).

This sequence belongs to the universal ribosomal protein uL6 family. Part of the 50S ribosomal subunit.

Its function is as follows. This protein binds to the 23S rRNA, and is important in its secondary structure. It is located near the subunit interface in the base of the L7/L12 stalk, and near the tRNA binding site of the peptidyltransferase center. This Dechloromonas aromatica (strain RCB) protein is Large ribosomal subunit protein uL6.